The following is a 555-amino-acid chain: Exodeoxyribonuclease 7 large subunit (555 aa).

This sequence belongs to the XseA family. As to quaternary structure, heterooligomer composed of large and small subunits.

It localises to the cytoplasm. It catalyses the reaction Exonucleolytic cleavage in either 5'- to 3'- or 3'- to 5'-direction to yield nucleoside 5'-phosphates.. Functionally, bidirectionally degrades single-stranded DNA into large acid-insoluble oligonucleotides, which are then degraded further into small acid-soluble oligonucleotides. This Chlamydia felis (strain Fe/C-56) (Chlamydophila felis) protein is Exodeoxyribonuclease 7 large subunit.